A 136-amino-acid polypeptide reads, in one-letter code: Transcription antitermination protein NusB (136 aa).

This sequence belongs to the NusB family.

In terms of biological role, involved in transcription antitermination. Required for transcription of ribosomal RNA (rRNA) genes. Binds specifically to the boxA antiterminator sequence of the ribosomal RNA (rrn) operons. In Salinispora tropica (strain ATCC BAA-916 / DSM 44818 / JCM 13857 / NBRC 105044 / CNB-440), this protein is Transcription antitermination protein NusB.